The sequence spans 289 residues: ATP synthase gamma chain (289 aa).

The protein belongs to the ATPase gamma chain family. In terms of assembly, F-type ATPases have 2 components, CF(1) - the catalytic core - and CF(0) - the membrane proton channel. CF(1) has five subunits: alpha(3), beta(3), gamma(1), delta(1), epsilon(1). CF(0) has three main subunits: a, b and c.

The protein resides in the cell inner membrane. Produces ATP from ADP in the presence of a proton gradient across the membrane. The gamma chain is believed to be important in regulating ATPase activity and the flow of protons through the CF(0) complex. This is ATP synthase gamma chain from Haemophilus influenzae (strain PittEE).